The chain runs to 455 residues: Maintenance of telomere capping protein 1 (455 aa).

Disordered regions lie at residues 1–113 (MAET…SATP) and 296–317 (AKKM…EDAS). The segment covering 27-38 (PTSKEFNNDDSK) has biased composition (basic and acidic residues). A compositionally biased stretch (polar residues) spans 80 to 113 (VAATSNERQQHDASNQPSQAAQTTINKNTESATP). The span at 296 to 305 (AKKMNKENKQ) shows a compositional bias: basic and acidic residues.

It belongs to the MTC1 family.

It localises to the cytoplasm. In terms of biological role, involved in telomere capping. The protein is Maintenance of telomere capping protein 1 of Schizosaccharomyces pombe (strain 972 / ATCC 24843) (Fission yeast).